Consider the following 691-residue polypeptide: Elongation factor G (691 aa).

In terms of domain architecture, tr-type G spans 8 to 282 (ERVRNIGIAA…AVVDYLPAPV (275 aa)). GTP contacts are provided by residues 17–24 (AHIDAGKT), 81–85 (DTPGH), and 135–138 (NKMD).

Belongs to the TRAFAC class translation factor GTPase superfamily. Classic translation factor GTPase family. EF-G/EF-2 subfamily.

The protein resides in the cytoplasm. Functionally, catalyzes the GTP-dependent ribosomal translocation step during translation elongation. During this step, the ribosome changes from the pre-translocational (PRE) to the post-translocational (POST) state as the newly formed A-site-bound peptidyl-tRNA and P-site-bound deacylated tRNA move to the P and E sites, respectively. Catalyzes the coordinated movement of the two tRNA molecules, the mRNA and conformational changes in the ribosome. The sequence is that of Elongation factor G from Prochlorococcus marinus (strain MIT 9313).